A 234-amino-acid polypeptide reads, in one-letter code: UPF0173 metal-dependent hydrolase R01310 (234 aa).

The protein belongs to the UPF0173 family.

The sequence is that of UPF0173 metal-dependent hydrolase R01310 from Rhizobium meliloti (strain 1021) (Ensifer meliloti).